We begin with the raw amino-acid sequence, 338 residues long: Glycerol-3-phosphate dehydrogenase [NAD(P)+] (338 aa).

NADPH is bound by residues Ser14, Tyr15, His35, and Lys109. Positions 109, 138, and 140 each coordinate sn-glycerol 3-phosphate. Position 142 (Ala142) interacts with NADPH. Sn-glycerol 3-phosphate-binding residues include Lys194, Asp247, Ser257, Arg258, and Asn259. Lys194 acts as the Proton acceptor in catalysis. Arg258 provides a ligand contact to NADPH. NADPH-binding residues include Val282 and Glu284.

It belongs to the NAD-dependent glycerol-3-phosphate dehydrogenase family.

The protein resides in the cytoplasm. It catalyses the reaction sn-glycerol 3-phosphate + NAD(+) = dihydroxyacetone phosphate + NADH + H(+). The catalysed reaction is sn-glycerol 3-phosphate + NADP(+) = dihydroxyacetone phosphate + NADPH + H(+). Its pathway is membrane lipid metabolism; glycerophospholipid metabolism. Its function is as follows. Catalyzes the reduction of the glycolytic intermediate dihydroxyacetone phosphate (DHAP) to sn-glycerol 3-phosphate (G3P), the key precursor for phospholipid synthesis. This is Glycerol-3-phosphate dehydrogenase [NAD(P)+] from Shewanella sp. (strain MR-4).